Here is a 526-residue protein sequence, read N- to C-terminus: Cell adhesion molecule CEACAM1 (526 aa).

The first 34 residues, 1–34 (MGHLSAPLHRVRVPWQGLLLTASLLTFWNPPTTA), serve as a signal peptide directing secretion. Gln-35 is modified (pyrrolidone carboxylic acid). The 108-residue stretch at 35 to 142 (QLTTESMPFN…EATGQFHVYP (108 aa)) folds into the Ig-like V-type domain. Over 35-428 (QLTTESMPFN…LPQENGLSPG (394 aa)) the chain is Extracellular. Residues 39–142 (ESMPFNVAEG…EATGQFHVYP (104 aa)) form a required for homophilic binding region. Asn-104, Asn-111, Asn-115, Asn-152, Asn-182, Asn-197, Asn-208, Asn-224, Asn-232, Asn-254, Asn-274, Asn-288, Asn-292, Asn-302, Asn-309, Asn-345, Asn-351, Asn-363, Asn-378, and Asn-405 each carry an N-linked (GlcNAc...) asparagine glycan. Ig-like C2-type domains lie at 145-232 (PKPS…VTLN), 237-317 (PDTP…KTII), and 323-413 (PVVA…IMLN). Cys-167 and Cys-215 are oxidised to a cystine. Cys-259 and Cys-299 are oxidised to a cystine. A disulfide bridge links Cys-348 with Cys-396. A helical membrane pass occupies residues 429 to 452 (AIAGIVIGVVALVALIAVALACFL). Residues 450–462 (CFLHFGKTGRASD) are interaction with calmodulin. The interaction with FLNA stretch occupies residues 452–526 (LHFGKTGRAS…EIIYSEVKKQ (75 aa)). Over 453–526 (HFGKTGRASD…EIIYSEVKKQ (74 aa)) the chain is Cytoplasmic. Positions 461–482 (SDQRDLTEHKPSVSNHTQDHSN) are enriched in basic and acidic residues. The segment at 461-513 (SDQRDLTEHKPSVSNHTQDHSNDPPNKMNEVTYSTLNFEAQQPTQPTSASPSL) is disordered. The segment covering 489–513 (NEVTYSTLNFEAQQPTQPTSASPSL) has biased composition (polar residues). The interval 489-526 (NEVTYSTLNFEAQQPTQPTSASPSLTATEIIYSEVKKQ) is required for interaction with PTPN11 and PTPN6 and for control of phosphorylation level. Phosphotyrosine; by SRC, LCK, INSR and EGFR is present on Tyr-493. Ser-508 carries the phosphoserine modification. Tyr-520 carries the phosphotyrosine; by INSR, SRC and LCK modification. The tract at residues 520-523 (YSEV) is essential for interaction with PTPN11 and PTPN6.

Belongs to the immunoglobulin superfamily. CEA family. As to quaternary structure, monomer. Oligomer. Heterodimer. Homodimer. Cis-dimer/oligomer (via Ig-like C2-type and/or via cytoplasmic domains); induced by trans-homophilic cell adhesion through an allosteric mechanism transmitted by the Ig-like V-type domain, and is regulated by intracellular calcium and calmodulin. Interacts (via cytoplasmic domain) with calmodulin in a calcium dependent manner; reduces homophilic cell adhesion through dissociation of dimer. Isoform 1 interacts (via cytoplasmic domain) with PTPN11 (preferentially) and PTPN6; cis-homodimer form is preferred; this interaction is decreased by formation of Isoform 1 /Isoform 8 cis-heterodimers and is dependent on the monomer/dimer equilibrium; this interaction is phosphorylation-dependent. Isoform 1 interacts with LYN. Isoform 1 interacts (via cytoplasmic domain) with SRC (via SH2 domain); this interaction is regulated by trans-homophilic cell adhesion. Isoform 1 interacts (via cytoplasmic domain) with LCK; mediates phosphorylation at Tyr-493 and Tyr-520 resulting in PTPN6 association. Isoform 1 interacts with PTPN6; this interaction is phosphorylation-dependent and causes a profound decrease in TCR stimulation-induced CD247 and ZAP70 phosphorylation. Isoform 1 interacts with TCR/CD3 complex through TCR beta chain and CD3E; colocalizes at the cell surface and upon stimulation of the TCR/CD3 complex recruits PTPN6 in the TCR/CD3 complex, resulting in dephosphorylation of CD247 and ZAP70. Isoform 1 interacts (via cytoplasmic domain) with SHC1 (via SH2 domain); SHC1 mediates interaction with INSR or EGFR in a Ser-508 phosphorylation-dependent manner. Isoform 1 interacts with EGFR; the interaction is indirect. Isoform 1 interacts with CSF3R; down-regulates the CSF3R-STAT3 pathway through recruitment of PTPN6 that dephosphorylates CSF3R. Isoform 1 (phosphorylated form) interacts with TLR4 and SYK; recruits PTPN6 that dephosphorylates SYK, reducing the production of reactive oxygen species (ROS) and lysosome disruption, leading to a reduction of the inflammasome activity. Isoform 1 interacts with FLNA; inhibits cell migration and cell scattering by interfering with the interaction of FLNA with RALA. Isoform 1 interacts (via cytoplasmic domain) with PXN; the interaction is phosphotyrosyl-dependent. Isoform 1 interacts with KLRK1; recruits PTPN6 that dephosphorylates VAV1. Isoform 1 interacts with CEACAM8. Isoform 1 interacts with FASN; this interaction is insulin and phosphorylation-dependent; reduces fatty-acid synthase activity. Interacts (via Ig-like V-type) with HAVCR2 (via Ig-like V-type); facilitates the maturation and cell surface expression of HAVCR2 thereby regulating T cell tolerance induction. Isoform 8 interacts (via the cytoplasmic domain) with ANXA2; this interaction is regulated by phosphorylation and appears in the AIIt complex. Interacts (via Lewis X moieties) with CD209 (via C-type lectin domain); this interaction is regulated by the glycosylation pattern of CEACAM1 on cell types and regulates contact between dendritic cells and neutrophils. In terms of processing, phosphorylated on serine and tyrosine. Isoform 1 is phosphorylated on tyrosine by Src family kinases like SRC and LCK and by receptor like CSF3R, EGFR and INSR upon stimulation. Phosphorylated at Ser-508; mediates activity. Phosphorylated at Tyr-493; regulates activity. Phosphorylated at Tyr-493 by EGFR and INSR upon stimulation; this phosphorylation is Ser-508-phosphorylation-dependent; mediates cellular internalization; increases interaction with downstream proteins like SHC1 and FASN. Phosphorylated at Tyr-493 and Tyr-520 by LCK; mediates PTPN6 association and is regulated by homophilic ligation of CEACAM1 in the absence of T cell activation. Phosphorylated at Tyr-520; mediates interaction with PTPN11. Post-translationally, phosphorylated on serine and threonine. Expressed in columnar epithelial cells of the colon (at protein level). The predominant forms expressed by T cells are those containing a long cytoplasmic domain. Expressed in granulocytes and lymphocytes. Leukocytes only express isoforms 6 and isoform 1.

The protein localises to the cell membrane. It is found in the lateral cell membrane. The protein resides in the apical cell membrane. It localises to the basal cell membrane. Its subcellular location is the cell junction. The protein localises to the adherens junction. It is found in the secreted. The protein resides in the cytoplasmic vesicle. It localises to the secretory vesicle membrane. Its subcellular location is the cell projection. The protein localises to the microvillus membrane. Cell adhesion protein that mediates homophilic cell adhesion in a calcium-independent manner. Plays a role as coinhibitory receptor in immune response, insulin action and also functions as an activator during angiogenesis. Its coinhibitory receptor function is phosphorylation- and PTPN6 -dependent, which in turn, suppress signal transduction of associated receptors by dephosphorylation of their downstream effectors. Plays a role in immune response, of T cells, natural killer (NK) and neutrophils. Upon TCR/CD3 complex stimulation, inhibits TCR-mediated cytotoxicity by blocking granule exocytosis by mediating homophilic binding to adjacent cells, allowing interaction with and phosphorylation by LCK and interaction with the TCR/CD3 complex which recruits PTPN6 resulting in dephosphorylation of CD247 and ZAP70. Also inhibits T cell proliferation and cytokine production through inhibition of JNK cascade and plays a crucial role in regulating autoimmunity and anti-tumor immunity by inhibiting T cell through its interaction with HAVCR2. Upon natural killer (NK) cells activation, inhibit KLRK1-mediated cytolysis of CEACAM1-bearing tumor cells by trans-homophilic interactions with CEACAM1 on the target cell and lead to cis-interaction between CEACAM1 and KLRK1, allowing PTPN6 recruitment and then VAV1 dephosphorylation. Upon neutrophils activation negatively regulates IL1B production by recruiting PTPN6 to a SYK-TLR4-CEACAM1 complex, that dephosphorylates SYK, reducing the production of reactive oxygen species (ROS) and lysosome disruption, which in turn, reduces the activity of the inflammasome. Down-regulates neutrophil production by acting as a coinhibitory receptor for CSF3R by down-regulating the CSF3R-STAT3 pathway through recruitment of PTPN6 that dephosphorylates CSF3R. Also regulates insulin action by promoting INS clearance and regulating lipogenesis in liver through regulating insulin signaling. Upon INS stimulation, undergoes phosphorylation by INSR leading to INS clearance by increasing receptor-mediated insulin endocytosis. This inernalization promotes interaction with FASN leading to receptor-mediated insulin degradation and to reduction of FASN activity leading to negative regulation of fatty acid synthesis. INSR-mediated phosphorylation also provokes a down-regulation of cell proliferation through SHC1 interaction resulting in decrease coupling of SHC1 to the MAPK3/ERK1-MAPK1/ERK2 and phosphatidylinositol 3-kinase pathways. Functions as activator in angiogenesis by promoting blood vessel remodeling through endothelial cell differentiation and migration and in arteriogenesis by increasing the number of collateral arteries and collateral vessel calibers after ischemia. Also regulates vascular permeability through the VEGFR2 signaling pathway resulting in control of nitric oxide production. Down-regulates cell growth in response to EGF through its interaction with SHC1 that mediates interaction with EGFR resulting in decrease coupling of SHC1 to the MAPK3/ERK1-MAPK1/ERK2 pathway. Negatively regulates platelet aggregation by decreasing platelet adhesion on type I collagen through the GPVI-FcRgamma complex. Inhibits cell migration and cell scattering through interaction with FLNA; interferes with the interaction of FLNA with RALA. Mediates bile acid transport activity in a phosphorylation dependent manner. Negatively regulates osteoclastogenesis. Its function is as follows. Cell adhesion protein that mediates homophilic cell adhesion in a calcium-independent manner. Promotes populations of T cells regulating IgA production and secretion associated with control of the commensal microbiota and resistance to enteropathogens. The sequence is that of Cell adhesion molecule CEACAM1 from Homo sapiens (Human).